Here is a 145-residue protein sequence, read N- to C-terminus: Large ribosomal subunit protein uL11 (145 aa).

It belongs to the universal ribosomal protein uL11 family. Part of the ribosomal stalk of the 50S ribosomal subunit. Interacts with L10 and the large rRNA to form the base of the stalk. L10 forms an elongated spine to which L12 dimers bind in a sequential fashion forming a multimeric L10(L12)X complex. Post-translationally, one or more lysine residues are methylated.

Forms part of the ribosomal stalk which helps the ribosome interact with GTP-bound translation factors. The chain is Large ribosomal subunit protein uL11 from Rickettsia felis (strain ATCC VR-1525 / URRWXCal2) (Rickettsia azadi).